The primary structure comprises 498 residues: MRINPTASGPGVSTLEKKNLGRIAQIIGPVLDVAFPPGKMPNIYNALVVKGRDTVGQQINVTCEVQQLLGNNRVRAVAMSATDGLTRGMEVIDTGAPLSVPVGGATLGRIFNVLGEPVDNLGPVDTRTTSPIHKSAPAFIQLDTKFSIFETGIKVVDLLAPYRRGGKIGLFGGAGVGKTVLIMELINNIAKAHGGVSVFGGVGERTREGNDLYMEMKESGVINEQNLAESKVALVYGQMNEPPGARMRVGLTALTMAEYFRDVNEQDVLLFIDNIFRFVQAGSEVSALLGRMPSAVGYQPTLSTEMGSLQERITSTKEGSITSIQAVYVPADDLTDPAPATTFAHLDATTVLSRGLAAKGIYPAVDPLDSTSTMLQPRIVGEEHYETAQRVKQTLQRYKELQDIIAILGLDELSEEDRLTVARARKIERFLSQPFFVAEVFTGSPGKYVGLAETIRGFKLILSGELDGLPEQAFYLVGNIDEATAKATQLEMESKLKK.

172-179 (GGAGVGKT) lines the ATP pocket.

The protein belongs to the ATPase alpha/beta chains family. F-type ATPases have 2 components, CF(1) - the catalytic core - and CF(0) - the membrane proton channel. CF(1) has five subunits: alpha(3), beta(3), gamma(1), delta(1), epsilon(1). CF(0) has four main subunits: a(1), b(1), b'(1) and c(9-12).

Its subcellular location is the plastid. The protein resides in the chloroplast thylakoid membrane. It carries out the reaction ATP + H2O + 4 H(+)(in) = ADP + phosphate + 5 H(+)(out). In terms of biological role, produces ATP from ADP in the presence of a proton gradient across the membrane. The catalytic sites are hosted primarily by the beta subunits. The protein is ATP synthase subunit beta, chloroplastic of Carica papaya (Papaya).